A 381-amino-acid chain; its full sequence is Queuine tRNA-ribosyltransferase (381 aa).

D92 functions as the Proton acceptor in the catalytic mechanism. Substrate contacts are provided by residues 92-96, D146, Q190, and G217; that span reads DSGGF. Positions 248-254 are RNA binding; sequence GVGRPED. D267 functions as the Nucleophile in the catalytic mechanism. The tract at residues 272–276 is RNA binding; important for wobble base 34 recognition; sequence TRNAR. Residues C305, C307, C310, and H337 each coordinate Zn(2+).

Belongs to the queuine tRNA-ribosyltransferase family. As to quaternary structure, homodimer. Within each dimer, one monomer is responsible for RNA recognition and catalysis, while the other monomer binds to the replacement base PreQ1. Zn(2+) is required as a cofactor.

The catalysed reaction is 7-aminomethyl-7-carbaguanine + guanosine(34) in tRNA = 7-aminomethyl-7-carbaguanosine(34) in tRNA + guanine. Its pathway is tRNA modification; tRNA-queuosine biosynthesis. Functionally, catalyzes the base-exchange of a guanine (G) residue with the queuine precursor 7-aminomethyl-7-deazaguanine (PreQ1) at position 34 (anticodon wobble position) in tRNAs with GU(N) anticodons (tRNA-Asp, -Asn, -His and -Tyr). Catalysis occurs through a double-displacement mechanism. The nucleophile active site attacks the C1' of nucleotide 34 to detach the guanine base from the RNA, forming a covalent enzyme-RNA intermediate. The proton acceptor active site deprotonates the incoming PreQ1, allowing a nucleophilic attack on the C1' of the ribose to form the product. After dissociation, two additional enzymatic reactions on the tRNA convert PreQ1 to queuine (Q), resulting in the hypermodified nucleoside queuosine (7-(((4,5-cis-dihydroxy-2-cyclopenten-1-yl)amino)methyl)-7-deazaguanosine). In Xanthomonas campestris pv. campestris (strain 8004), this protein is Queuine tRNA-ribosyltransferase.